A 433-amino-acid polypeptide reads, in one-letter code: 5-methylthioadenosine/S-adenosylhomocysteine deaminase (433 aa).

Residues histidine 67 and histidine 69 each coordinate Zn(2+). Glutamate 96, arginine 148, arginine 158, and histidine 186 together coordinate substrate. Histidine 213 is a Zn(2+) binding site. Residues glutamate 216 and aspartate 301 each contribute to the substrate site. Residue aspartate 301 participates in Zn(2+) binding.

The protein belongs to the metallo-dependent hydrolases superfamily. MTA/SAH deaminase family. Requires Zn(2+) as cofactor.

The enzyme catalyses S-adenosyl-L-homocysteine + H2O + H(+) = S-inosyl-L-homocysteine + NH4(+). It carries out the reaction S-methyl-5'-thioadenosine + H2O + H(+) = S-methyl-5'-thioinosine + NH4(+). Functionally, catalyzes the deamination of 5-methylthioadenosine and S-adenosyl-L-homocysteine into 5-methylthioinosine and S-inosyl-L-homocysteine, respectively. Is also able to deaminate adenosine. This is 5-methylthioadenosine/S-adenosylhomocysteine deaminase from Pelotomaculum thermopropionicum (strain DSM 13744 / JCM 10971 / SI).